The sequence spans 197 residues: Phosphoheptose isomerase (197 aa).

One can recognise an SIS domain in the interval 34–196 (MVQCLLGGNK…DRTLFPQDEQ (163 aa)). 49–51 (NGG) contributes to the substrate binding site. Positions 58 and 62 each coordinate Zn(2+). Residues E62, 91 to 92 (ND), 117 to 119 (STS), S122, and Q172 contribute to the substrate site. 2 residues coordinate Zn(2+): Q172 and H180.

This sequence belongs to the SIS family. GmhA subfamily. In terms of assembly, homotetramer. The cofactor is Zn(2+).

It localises to the cytoplasm. The catalysed reaction is 2 D-sedoheptulose 7-phosphate = D-glycero-alpha-D-manno-heptose 7-phosphate + D-glycero-beta-D-manno-heptose 7-phosphate. It functions in the pathway carbohydrate biosynthesis; D-glycero-D-manno-heptose 7-phosphate biosynthesis; D-glycero-alpha-D-manno-heptose 7-phosphate and D-glycero-beta-D-manno-heptose 7-phosphate from sedoheptulose 7-phosphate: step 1/1. Its function is as follows. Catalyzes the isomerization of sedoheptulose 7-phosphate in D-glycero-D-manno-heptose 7-phosphate. The sequence is that of Phosphoheptose isomerase from Shewanella oneidensis (strain ATCC 700550 / JCM 31522 / CIP 106686 / LMG 19005 / NCIMB 14063 / MR-1).